A 347-amino-acid chain; its full sequence is Protein RecA (347 aa).

65 to 72 provides a ligand contact to ATP; it reads GPESSGKT. Basic and acidic residues predominate over residues 327 to 336; sequence KFEPTELSRE. A disordered region spans residues 327 to 347; sequence KFEPTELSREEGDEDTLEDTM. Residues 337–347 are compositionally biased toward acidic residues; it reads EGDEDTLEDTM.

The protein belongs to the RecA family.

The protein localises to the cytoplasm. In terms of biological role, can catalyze the hydrolysis of ATP in the presence of single-stranded DNA, the ATP-dependent uptake of single-stranded DNA by duplex DNA, and the ATP-dependent hybridization of homologous single-stranded DNAs. It interacts with LexA causing its activation and leading to its autocatalytic cleavage. In Xylella fastidiosa (strain 9a5c), this protein is Protein RecA.